The primary structure comprises 556 residues: Formate--tetrahydrofolate ligase (556 aa).

Residue 65–72 (TPAGEGKT) participates in ATP binding.

Belongs to the formate--tetrahydrofolate ligase family.

It carries out the reaction (6S)-5,6,7,8-tetrahydrofolate + formate + ATP = (6R)-10-formyltetrahydrofolate + ADP + phosphate. Its pathway is one-carbon metabolism; tetrahydrofolate interconversion. This is Formate--tetrahydrofolate ligase from Heliobacterium modesticaldum (strain ATCC 51547 / Ice1).